Reading from the N-terminus, the 255-residue chain is Methylthioribulose-1-phosphate dehydratase (255 aa).

C98 contributes to the substrate binding site. Residues H116 and H118 each coordinate Zn(2+). The active-site Proton donor/acceptor is E150. Residue H207 coordinates Zn(2+).

This sequence belongs to the aldolase class II family. MtnB subfamily. Zn(2+) is required as a cofactor.

Its subcellular location is the cytoplasm. It catalyses the reaction 5-(methylsulfanyl)-D-ribulose 1-phosphate = 5-methylsulfanyl-2,3-dioxopentyl phosphate + H2O. The protein operates within amino-acid biosynthesis; L-methionine biosynthesis via salvage pathway; L-methionine from S-methyl-5-thio-alpha-D-ribose 1-phosphate: step 2/6. In terms of biological role, catalyzes the dehydration of methylthioribulose-1-phosphate (MTRu-1-P) into 2,3-diketo-5-methylthiopentyl-1-phosphate (DK-MTP-1-P). The chain is Methylthioribulose-1-phosphate dehydratase from Pyricularia oryzae (strain 70-15 / ATCC MYA-4617 / FGSC 8958) (Rice blast fungus).